A 198-amino-acid chain; its full sequence is Probable chemoreceptor glutamine deamidase CheD (198 aa).

This sequence belongs to the CheD family.

It catalyses the reaction L-glutaminyl-[protein] + H2O = L-glutamyl-[protein] + NH4(+). In terms of biological role, probably deamidates glutamine residues to glutamate on methyl-accepting chemotaxis receptors (MCPs), playing an important role in chemotaxis. The polypeptide is Probable chemoreceptor glutamine deamidase CheD (Xanthomonas campestris pv. campestris (strain 8004)).